The sequence spans 363 residues: Aminomethyltransferase (363 aa).

It belongs to the GcvT family. In terms of assembly, the glycine cleavage system is composed of four proteins: P, T, L and H.

The catalysed reaction is N(6)-[(R)-S(8)-aminomethyldihydrolipoyl]-L-lysyl-[protein] + (6S)-5,6,7,8-tetrahydrofolate = N(6)-[(R)-dihydrolipoyl]-L-lysyl-[protein] + (6R)-5,10-methylene-5,6,7,8-tetrahydrofolate + NH4(+). The glycine cleavage system catalyzes the degradation of glycine. The protein is Aminomethyltransferase of Thermosipho melanesiensis (strain DSM 12029 / CIP 104789 / BI429).